The chain runs to 687 residues: Glycine--tRNA ligase beta subunit (687 aa).

This sequence belongs to the class-II aminoacyl-tRNA synthetase family. In terms of assembly, tetramer of two alpha and two beta subunits.

It localises to the cytoplasm. The enzyme catalyses tRNA(Gly) + glycine + ATP = glycyl-tRNA(Gly) + AMP + diphosphate. In Neisseria meningitidis serogroup C (strain 053442), this protein is Glycine--tRNA ligase beta subunit.